We begin with the raw amino-acid sequence, 361 residues long: Heme A synthase (361 aa).

The next 8 membrane-spanning stretches (helical) occupy residues 22–42 (LWVRIWLYCVIVTLFAIVLVG), 109–129 (LLARGVGFVFALPLLFFWVTG), 139–159 (LLGILALGGLQGAVGWWMVAS), 175–195 (HLTIACLIFNATMAVARGLAP), 208–228 (FAFWLVVAVLVQIYLGGLVAG), 269–289 (FVHRLGAYVVLLLALWHAIAT), 303–323 (VLLFLLVCVQAAIGIATLLMV), and 324–344 (VPMDVALAHQAMALIVLGFAT). His-271 is a binding site for heme. His-332 is a heme binding site.

It belongs to the COX15/CtaA family. Type 2 subfamily. In terms of assembly, interacts with CtaB. It depends on heme b as a cofactor.

Its subcellular location is the cell membrane. It catalyses the reaction Fe(II)-heme o + 2 A + H2O = Fe(II)-heme a + 2 AH2. The protein operates within porphyrin-containing compound metabolism; heme A biosynthesis; heme A from heme O: step 1/1. Functionally, catalyzes the conversion of heme O to heme A by two successive hydroxylations of the methyl group at C8. The first hydroxylation forms heme I, the second hydroxylation results in an unstable dihydroxymethyl group, which spontaneously dehydrates, resulting in the formyl group of heme A. The protein is Heme A synthase of Chelativorans sp. (strain BNC1).